Consider the following 301-residue polypeptide: NADH-cytochrome b5 reductase 3 (301 aa).

Glycine 2 is lipidated: N-myristoyl glycine. Residues 40-152 form the FAD-binding FR-type domain; it reads DIKYSLRLID…RGPNGLLVYQ (113 aa). At lysine 42 the chain carries N6-acetyllysine. Tyrosine 43 carries the phosphotyrosine modification. FAD-binding residues include arginine 92, proline 93, tyrosine 94, valine 109, lysine 111, and phenylalanine 114. An N6-acetyllysine modification is found at lysine 120. Residues lysine 126, methionine 127, serine 128, and threonine 185 each coordinate FAD.

This sequence belongs to the flavoprotein pyridine nucleotide cytochrome reductase family. As to quaternary structure, component of a complex composed of cytochrome b5, NADH-cytochrome b5 reductase (CYB5R3) and MTARC2. Interacts with MTLN; the interaction is required to maintain cellular lipid composition and leads to stimulation of mitochondrial respiratory complex I activity. The cofactor is FAD.

Its subcellular location is the endoplasmic reticulum membrane. It localises to the mitochondrion outer membrane. The catalysed reaction is 2 Fe(III)-[cytochrome b5] + NADH = 2 Fe(II)-[cytochrome b5] + NAD(+) + H(+). Functionally, catalyzes the reduction of two molecules of cytochrome b5 using NADH as the electron donor. This is NADH-cytochrome b5 reductase 3 (CYB5R3) from Macaca fascicularis (Crab-eating macaque).